We begin with the raw amino-acid sequence, 349 residues long: DNA repair protein XRCC3 (349 aa).

Methionine 1 carries the post-translational modification N-acetylmethionine. 107–114 is an ATP binding site; sequence GCSSAGKT.

Belongs to the RecA family. RAD51 subfamily. Interacts with RAD51C and RAD51. Part of the CX3 complex consisting of RAD51C and XRCC3; the complex has a ring-like structure arranged into a flat disc around a central channel; CX3 can interact with RAD51 in vitro. Forms a complex with FANCD2, BRCA2 and phosphorylated FANCG. Interacts with SWSAP1 and ZSWIM7; involved in homologous recombination repair. Interacts directly with PALB2 which may serve as a scaffold for a HR complex containing PALB2, BRCA2, RAD51C, RAD51 and XRCC3.

The protein resides in the nucleus. Its subcellular location is the cytoplasm. The protein localises to the perinuclear region. It localises to the mitochondrion matrix. Functionally, involved in the homologous recombination repair (HRR) pathway of double-stranded DNA, thought to repair chromosomal fragmentation, translocations and deletions. Part of the RAD21 paralog protein complex CX3 which acts in the BRCA1-BRCA2-dependent HR pathway. Upon DNA damage, CX3 acts downstream of RAD51 recruitment; the complex binds predominantly to the intersection of the four duplex arms of the Holliday junction (HJ) and to junctions of replication forks. Involved in HJ resolution and thus in processing HR intermediates late in the DNA repair process; the function may be linked to the CX3 complex and seems to involve GEN1 during mitotic cell cycle progression. Part of a PALB2-scaffolded HR complex containing BRCA2 and RAD51C and which is thought to play a role in DNA repair by HR. Plays a role in regulating mitochondrial DNA copy number under conditions of oxidative stress in the presence of RAD51 and RAD51C. In Mus musculus (Mouse), this protein is DNA repair protein XRCC3 (Xrcc3).